We begin with the raw amino-acid sequence, 372 residues long: Putative glutamate--cysteine ligase 2 (372 aa).

This sequence belongs to the glutamate--cysteine ligase type 2 family. YbdK subfamily. In terms of assembly, homodimer.

The catalysed reaction is L-cysteine + L-glutamate + ATP = gamma-L-glutamyl-L-cysteine + ADP + phosphate + H(+). Functionally, ATP-dependent carboxylate-amine ligase which exhibits weak glutamate--cysteine ligase activity. This chain is Putative glutamate--cysteine ligase 2 (ybdK), found in Escherichia coli O17:K52:H18 (strain UMN026 / ExPEC).